The chain runs to 635 residues: Threonine--tRNA ligase (635 aa).

A TGS domain is found at 1 to 62 (MITITLPDGS…EHDAMLRIIT (62 aa)). A catalytic region spans residues 244 to 535 (DHRKIGKVQD…LIEHYAGIWP (292 aa)). Zn(2+) is bound by residues C335, H386, and H512.

The protein belongs to the class-II aminoacyl-tRNA synthetase family. In terms of assembly, homodimer. Zn(2+) serves as cofactor.

The protein resides in the cytoplasm. It catalyses the reaction tRNA(Thr) + L-threonine + ATP = L-threonyl-tRNA(Thr) + AMP + diphosphate + H(+). Functionally, catalyzes the attachment of threonine to tRNA(Thr) in a two-step reaction: L-threonine is first activated by ATP to form Thr-AMP and then transferred to the acceptor end of tRNA(Thr). Also edits incorrectly charged L-seryl-tRNA(Thr). The polypeptide is Threonine--tRNA ligase (Xylella fastidiosa (strain 9a5c)).